The chain runs to 237 residues: Ribonuclease PH (237 aa).

Phosphate contacts are provided by residues R86 and 124–126 (GTR).

Belongs to the RNase PH family. Homohexameric ring arranged as a trimer of dimers.

It catalyses the reaction tRNA(n+1) + phosphate = tRNA(n) + a ribonucleoside 5'-diphosphate. In terms of biological role, phosphorolytic 3'-5' exoribonuclease that plays an important role in tRNA 3'-end maturation. Removes nucleotide residues following the 3'-CCA terminus of tRNAs; can also add nucleotides to the ends of RNA molecules by using nucleoside diphosphates as substrates, but this may not be physiologically important. Probably plays a role in initiation of 16S rRNA degradation (leading to ribosome degradation) during starvation. The chain is Ribonuclease PH from Shewanella oneidensis (strain ATCC 700550 / JCM 31522 / CIP 106686 / LMG 19005 / NCIMB 14063 / MR-1).